The primary structure comprises 342 residues: L-threonine 3-dehydrogenase (342 aa).

Residue Cys38 coordinates Zn(2+). Active-site charge relay system residues include Thr40 and His43. Residues His63, Glu64, Cys93, Cys96, Cys99, and Cys107 each contribute to the Zn(2+) site. NAD(+) contacts are provided by residues Ile175, Asp195, Arg200, 262-264, and 286-287; these read LGI and IY.

This sequence belongs to the zinc-containing alcohol dehydrogenase family. Homotetramer. Zn(2+) is required as a cofactor.

The protein resides in the cytoplasm. The catalysed reaction is L-threonine + NAD(+) = (2S)-2-amino-3-oxobutanoate + NADH + H(+). Its pathway is amino-acid degradation; L-threonine degradation via oxydo-reductase pathway; glycine from L-threonine: step 1/2. Its function is as follows. Catalyzes the NAD(+)-dependent oxidation of L-threonine to 2-amino-3-ketobutyrate. This Burkholderia ambifaria (strain ATCC BAA-244 / DSM 16087 / CCUG 44356 / LMG 19182 / AMMD) (Burkholderia cepacia (strain AMMD)) protein is L-threonine 3-dehydrogenase.